The primary structure comprises 224 residues: 2-C-methyl-D-erythritol 4-phosphate cytidylyltransferase (224 aa).

It belongs to the IspD/TarI cytidylyltransferase family. IspD subfamily.

The catalysed reaction is 2-C-methyl-D-erythritol 4-phosphate + CTP + H(+) = 4-CDP-2-C-methyl-D-erythritol + diphosphate. Its pathway is isoprenoid biosynthesis; isopentenyl diphosphate biosynthesis via DXP pathway; isopentenyl diphosphate from 1-deoxy-D-xylulose 5-phosphate: step 2/6. Catalyzes the formation of 4-diphosphocytidyl-2-C-methyl-D-erythritol from CTP and 2-C-methyl-D-erythritol 4-phosphate (MEP). The protein is 2-C-methyl-D-erythritol 4-phosphate cytidylyltransferase of Caldicellulosiruptor bescii (strain ATCC BAA-1888 / DSM 6725 / KCTC 15123 / Z-1320) (Anaerocellum thermophilum).